The sequence spans 143 residues: Class II hydrophobin qid3 (143 aa).

The N-terminal stretch at Met1–Ala17 is a signal peptide. Pro residues predominate over residues Asn20–Thr37. Positions Asn20 to Asn67 are disordered. Repeat copies occupy residues Asn41–Gly42, Asn43–Gly44, Asn47–Gly48, Asn49–Gly50, Asn51–Gly52, Asn53–Gly54, Asn55–Gly56, Asn59–Gly60, Asn61–Gly62, and Asn63–Gly64. Residues Asn41–Gly64 are 10 X 2 AA repeats of N-G. Over residues Gly42–Asn63 the composition is skewed to gly residues. 3 disulfides stabilise this stretch: Cys74/Cys124, Cys85/Cys97, and Cys125/Cys136.

This sequence belongs to the cerato-ulmin hydrophobin family. Homotetramer. Further self-assembles to form highly ordered films at water-air interfaces through intermolecular interactions.

It localises to the secreted. Its subcellular location is the cell wall. In terms of biological role, aerial growth, conidiation, and dispersal of filamentous fungi in the environment rely upon a capability of their secreting small amphipathic proteins called hydrophobins (HPBs) with low sequence identity. Class I can self-assemble into an outermost layer of rodlet bundles on aerial cell surfaces, conferring cellular hydrophobicity that supports fungal growth, development and dispersal; whereas Class II form highly ordered films at water-air interfaces through intermolecular interactions but contribute nothing to the rodlet structure. Qid3 is a class II hydrophobin that might acts as a chitinase inhibitor at the cell surface that blocks the degradation of the chitin rings localized in the budding region of dividing cells. The sequence is that of Class II hydrophobin qid3 from Trichoderma harzianum (Hypocrea lixii).